Consider the following 303-residue polypeptide: Eukaryotic translation initiation factor 3 subunit G (303 aa).

The interval 1–38 (MATQTKHDWADDEDLEETTTTTAPTTDLPPPQKIQNKD) is disordered. One can recognise an RRM domain in the interval 223-301 (ATLRVTNVSE…LILRVEFAKK (79 aa)).

It belongs to the eIF-3 subunit G family. Component of the eukaryotic translation initiation factor 3 (eIF-3) complex.

The protein resides in the cytoplasm. RNA-binding component of the eukaryotic translation initiation factor 3 (eIF-3) complex, which is involved in protein synthesis of a specialized repertoire of mRNAs and, together with other initiation factors, stimulates binding of mRNA and methionyl-tRNAi to the 40S ribosome. The eIF-3 complex specifically targets and initiates translation of a subset of mRNAs involved in cell proliferation. This subunit can bind 18S rRNA. This chain is Eukaryotic translation initiation factor 3 subunit G, found in Chaetomium globosum (strain ATCC 6205 / CBS 148.51 / DSM 1962 / NBRC 6347 / NRRL 1970) (Soil fungus).